Reading from the N-terminus, the 249-residue chain is MSYDRAITVFSPDGHLFQVEYAQEAVKKGSTAVGVRGKDIVVLGVEKKSVAKLQDERTVRKICALDDNVCMAFAGLTADARIVINRARVECQSHRLTVEDPVTVEYITRYIASLKQRYTQSKRRRPFGISALIVGFDFDGTPRLYQTDPSGTYHAWKANAIGRGAKSVRVEFEKNYTDEAIETDDLTIKLVIKALLEVVQSGGKNIELAVMRRDQPLKILTSPEEIEKYVAEIEKEKEENEKKKQKKTS.

This sequence belongs to the peptidase T1A family. As to quaternary structure, the 26S proteasome consists of a 20S proteasome core and two 19S regulatory subunits. The 20S proteasome core is a barrel-shaped complex made of 28 subunits that are arranged in four stacked rings. The two outer rings are each formed by seven alpha subunits, and the two inner rings are formed by seven beta subunits. The proteolytic activity is exerted by three beta-subunits PSMB5, PSMB6 and PSMB7. PSMA7 interacts directly with the PSMG1-PSMG2 heterodimer which promotes 20S proteasome assembly. Interacts with HIF1A. Interacts with RAB7A. Interacts with PRKN. Interacts with ABL1 and ABL2. Interacts with EMAP2. Interacts with MAVS.

Its subcellular location is the cytoplasm. It is found in the nucleus. In terms of biological role, component of the 20S core proteasome complex involved in the proteolytic degradation of most intracellular proteins. This complex plays numerous essential roles within the cell by associating with different regulatory particles. Associated with two 19S regulatory particles, forms the 26S proteasome and thus participates in the ATP-dependent degradation of ubiquitinated proteins. The 26S proteasome plays a key role in the maintenance of protein homeostasis by removing misfolded or damaged proteins that could impair cellular functions, and by removing proteins whose functions are no longer required. Associated with the PA200 or PA28, the 20S proteasome mediates ubiquitin-independent protein degradation. This type of proteolysis is required in several pathways including spermatogenesis (20S-PA200 complex) or generation of a subset of MHC class I-presented antigenic peptides (20S-PA28 complex). Inhibits the transactivation function of HIF-1A under both normoxic and hypoxia-mimicking conditions. The interaction with EMAP2 increases the proteasome-mediated HIF-1A degradation under the hypoxic conditions. Plays a role in hepatitis C virus internal ribosome entry site-mediated translation. Mediates nuclear translocation of the androgen receptor (AR) and thereby enhances androgen-mediated transactivation. Promotes MAVS degradation and thereby negatively regulates MAVS-mediated innate immune response. This chain is Proteasome subunit alpha type-7 (PSMA7), found in Gallus gallus (Chicken).